Consider the following 56-residue polypeptide: Large ribosomal subunit protein bL32 (56 aa).

The segment at 1 to 29 (MAVQQNKPSRSKRGMRRSHDALTTSSVSV) is disordered.

This sequence belongs to the bacterial ribosomal protein bL32 family.

This Pectobacterium atrosepticum (strain SCRI 1043 / ATCC BAA-672) (Erwinia carotovora subsp. atroseptica) protein is Large ribosomal subunit protein bL32.